A 351-amino-acid chain; its full sequence is MAAAVNSGSSLPLFDCPTWAGKPPPGLHLDVVKGDKLIEKLIIDEKKYYLFGRNPDLCDFTIDHQSCSRVHAALVYHKHLKRVFLIDLNSTHGTFLGHIRLEPHKPQQIPIDSTVSFGASTRAYTLREKPQTLPSAVKGDEKMGGEDDELKGLLGLPEEETELDNLTEFNTAHNKRISTLTIEEGNLDIQRPKRKRKNSRVTFSEDDEIINPEDVDPSVGRFRNMVQTAVVPVKKKRMEGSGSLGLEESGSRRMQNFAFSGGLYGGLPPTHSETGSQPHGIHGTALIGGLPMPYPNLAPDVDLTPVVPSAVAINPTPNPAVYNPEAVNEPKKKKYAKEAWPGKKPTPSLLI.

Residues 1-142 form an interaction with CDC5L, SF3B1 and MELK region; it reads MAAAVNSGSS…LPSAVKGDEK (142 aa). The FHA domain maps to 49–101; the sequence is YLFGRNPDLCDFTIDHQSCSRVHAALVYHKHLKRVFLIDLNSTHGTFLGHIRL. The interval 143–224 is interaction with EED; it reads MGGEDDELKG…VDPSVGRFRN (82 aa). The residue at position 161 (Thr161) is a Phosphothreonine. Residues Ser178 and Ser199 each carry the phosphoserine modification. 2 consecutive short sequence motifs (nuclear localization signal) follow at residues 185–209 and 210–240; these read GNLDIQRPKRKRKNSRVTFSEDDEI and INPEDVDPSVGRFRNMVQTAVVPVKKKRMEG. An involved in PP-1 inhibition region spans residues 191 to 200; it reads RPKRKRKNSR. The interval 200–203 is involved in PP-1 binding; that stretch reads RVTF. A Phosphoserine modification is found at Ser204. Position 249 is a phosphoserine (Ser249). At Tyr264 the chain carries Phosphotyrosine. The interaction with EED stretch occupies residues 310 to 329; sequence AVAINPTPNPAVYNPEAVNE. Positions 314-351 are disordered; it reads NPTPNPAVYNPEAVNEPKKKKYAKEAWPGKKPTPSLLI. An RNA-binding region spans residues 330–351; sequence PKKKKYAKEAWPGKKPTPSLLI. The segment at 331-337 is involved in PP-1 inhibition; that stretch reads KKKKYAK. Residue Tyr335 is modified to Phosphotyrosine.

In terms of assembly, interacts with phosphorylated CDC5L, SF3B1 and MELK. Part of the spliceosome. Interacts with PPP1CA, PPP1CB and PPP1CC. Interacts with EED. Part of a complex consisting of PPP1R8, EED, HDAC2 and PP-1. Post-translationally, may be inactivated by phosphorylation on Ser-199 or Ser-204.

The protein localises to the nucleus. Its subcellular location is the nucleus speckle. Inhibitor subunit of the major nuclear protein phosphatase-1 (PP-1). It has RNA-binding activity but does not cleave RNA and may target PP-1 to RNA-associated substrates. May also be involved in pre-mRNA splicing. Binds DNA and might act as a transcriptional repressor. Essential for cell proliferation and early embryonic development. This chain is Nuclear inhibitor of protein phosphatase 1 (Ppp1r8), found in Mus musculus (Mouse).